A 289-amino-acid chain; its full sequence is MASGKEIRTKIKSVQNTRKITKAMEMVAASKMRKAQDRMRAARPYAEKIRRLAANLSQANVTDYKHAFLVQKDEVKRVGLILVTTDKGLCGGLNTNIQRVALNAMKGWDASGTTEIQACCIGNKGFGFMQRMGAKVVSHVVQLGDTPHLEKMIGPVKIMLDAFQNGELDAVYVAYTRFINTMKQEPVLEQLLPLTGEKLGTPEGSWDYLYEPDPQVVIDEMLVRYVEALVYQAVAENMASEQSARMVAMKAASDNAKNVIGELQLVYNKTRQAAITKELSEIVSGAAAV.

The protein belongs to the ATPase gamma chain family. F-type ATPases have 2 components, CF(1) - the catalytic core - and CF(0) - the membrane proton channel. CF(1) has five subunits: alpha(3), beta(3), gamma(1), delta(1), epsilon(1). CF(0) has three main subunits: a, b and c.

It is found in the cell inner membrane. Its function is as follows. Produces ATP from ADP in the presence of a proton gradient across the membrane. The gamma chain is believed to be important in regulating ATPase activity and the flow of protons through the CF(0) complex. The chain is ATP synthase gamma chain from Aromatoleum aromaticum (strain DSM 19018 / LMG 30748 / EbN1) (Azoarcus sp. (strain EbN1)).